The primary structure comprises 1557 residues: DVA-1 polyprotein (1557 aa).

An N-terminal signal peptide occupies residues 1–21 (MKSTSFITLLLLSYFIVEAHS). A propeptide spanning residues 22-60 (SIFHWDDERLFKHDDTHSWLTDVQKAELETLKHQPIQLR) is cleaved from the precursor. N-linked (GlcNAc...) asparagine glycosylation is present at N997.

The protein belongs to the NPA family. Nematode polyprotein allergens (NPAs) are synthesized as large polypeptides that are subsequently proteolytically cleaved to active polypeptide units.

Its function is as follows. Has high binding affinity for fatty acids and retinoids. The sequence is that of DVA-1 polyprotein (DVA-1) from Dictyocaulus viviparus (Bovine lungworm).